The chain runs to 728 residues: Catalase B (728 aa).

Active-site residues include H107 and N180. Y394 is a heme binding site.

This sequence belongs to the catalase family. Heme is required as a cofactor.

It is found in the secreted. The enzyme catalyses 2 H2O2 = O2 + 2 H2O. Occurs in almost all aerobically respiring organisms and serves to protect cells from the toxic effects of hydrogen peroxide. In Ajellomyces capsulatus (Darling's disease fungus), this protein is Catalase B (CATB).